A 257-amino-acid polypeptide reads, in one-letter code: MAHSQVGIQLISESTEKTLAELIALCAEHNIIHNEKSPLALVQTDDRLELRKLDEPKLGAVYVDFVGGTMAHRRKFGGGRGEAVAKAVGIKGSALPTVIDATAGLGRDAFVLAAIGCQVRLVERHPVVFLLLQDGLNRAYQDEEIGEMLQQNLHLLNVQHINELDPNSDYADVVYLDPMYPHKQKSALVKKEMRVFQHLVGADLDADELLLPALQLAKKRVVVKRPDYAEFLCGKQPHFSHETKNHRFDIYMGASQC.

S-adenosyl-L-methionine is bound by residues arginine 107 to aspartate 108, glutamate 123 to arginine 124, and aspartate 177.

Belongs to the methyltransferase superfamily. RsmJ family.

The protein resides in the cytoplasm. The catalysed reaction is guanosine(1516) in 16S rRNA + S-adenosyl-L-methionine = N(2)-methylguanosine(1516) in 16S rRNA + S-adenosyl-L-homocysteine + H(+). Its function is as follows. Specifically methylates the guanosine in position 1516 of 16S rRNA. The polypeptide is Ribosomal RNA small subunit methyltransferase J (Haemophilus influenzae (strain ATCC 51907 / DSM 11121 / KW20 / Rd)).